The primary structure comprises 165 residues: Chorismate pyruvate-lyase (165 aa).

Substrate is bound by residues Met35, Arg77, Leu115, and Glu156.

It belongs to the UbiC family. In terms of assembly, monomer.

The protein resides in the cytoplasm. The catalysed reaction is chorismate = 4-hydroxybenzoate + pyruvate. Its pathway is cofactor biosynthesis; ubiquinone biosynthesis. Functionally, removes the pyruvyl group from chorismate, with concomitant aromatization of the ring, to provide 4-hydroxybenzoate (4HB) for the ubiquinone pathway. The sequence is that of Chorismate pyruvate-lyase from Salmonella gallinarum (strain 287/91 / NCTC 13346).